Reading from the N-terminus, the 492-residue chain is Probable beta-1,4-xylosyltransferase IRX14H (492 aa).

Residues 1–33 (MKLSVFRLSYWNRRGSSFRSSPSLDPSFDGKSP) lie on the Cytoplasmic side of the membrane. The chain crosses the membrane as a helical; Signal-anchor for type II membrane protein span at residues 34-54 (SSVFWFVIHGLCCLISLILGF). The Lumenal segment spans residues 55-492 (RFSHLVLFFL…FDGVKVSATS (438 aa)). Residues asparagine 99, asparagine 196, and asparagine 314 are each glycosylated (N-linked (GlcNAc...) asparagine). The disordered stretch occupies residues 457–492 (IKEAKSNSKPRVSKSKSYKEKQEPKAFDGVKVSATS). Residues 473–484 (SYKEKQEPKAFD) are compositionally biased toward basic and acidic residues.

It belongs to the glycosyltransferase 43 family. Expressed in developing interfascicular fibers and xylem cells in stems and developing secondary xylem in roots.

It is found in the golgi apparatus membrane. Functionally, involved in the synthesis of the hemicellulose glucuronoxylan, a major component of secondary cell walls. Probably involved in the elongation of glucuronoxylan xylosyl backbone. The protein is Probable beta-1,4-xylosyltransferase IRX14H (IRX14H) of Arabidopsis thaliana (Mouse-ear cress).